The primary structure comprises 365 residues: tRNA/tmRNA (uracil-C(5))-methyltransferase (365 aa).

Residues glutamine 189, tyrosine 217, asparagine 222, glutamate 238, and aspartate 298 each coordinate S-adenosyl-L-methionine. The Nucleophile role is filled by cysteine 323. Glutamate 357 functions as the Proton acceptor in the catalytic mechanism.

Belongs to the class I-like SAM-binding methyltransferase superfamily. RNA M5U methyltransferase family. TrmA subfamily.

It catalyses the reaction uridine(54) in tRNA + S-adenosyl-L-methionine = 5-methyluridine(54) in tRNA + S-adenosyl-L-homocysteine + H(+). It carries out the reaction uridine(341) in tmRNA + S-adenosyl-L-methionine = 5-methyluridine(341) in tmRNA + S-adenosyl-L-homocysteine + H(+). In terms of biological role, dual-specificity methyltransferase that catalyzes the formation of 5-methyluridine at position 54 (m5U54) in all tRNAs, and that of position 341 (m5U341) in tmRNA (transfer-mRNA). In Shewanella woodyi (strain ATCC 51908 / MS32), this protein is tRNA/tmRNA (uracil-C(5))-methyltransferase.